We begin with the raw amino-acid sequence, 298 residues long: Acidic endochitinase (298 aa).

The signal sequence occupies residues 1 to 29 (MKPNMACLKQVSALLLPLLFISFFKPSHA). The GH18 domain maps to 30–298 (GGISVYWGQN…GYSGAIIGSV (269 aa)). 2 cysteine pairs are disulfide-bonded: C49–C96 and C79–C86. Residue E156 is the Proton donor of the active site. A disulfide bridge links C185 with C214.

Belongs to the glycosyl hydrolase 18 family. Chitinase class II subfamily.

The protein resides in the secreted. It is found in the extracellular space. The enzyme catalyses Random endo-hydrolysis of N-acetyl-beta-D-glucosaminide (1-&gt;4)-beta-linkages in chitin and chitodextrins.. Its function is as follows. This protein functions as a defense against chitin containing fungal pathogens. This is Acidic endochitinase from Phaseolus angularis (Azuki bean).